The chain runs to 188 residues: Elongation factor P (188 aa).

K34 carries the post-translational modification N6-(3,6-diaminohexanoyl)-5-hydroxylysine.

The protein belongs to the elongation factor P family. In terms of processing, may be beta-lysylated on the epsilon-amino group of Lys-34 by the combined action of EpmA and EpmB, and then hydroxylated on the C5 position of the same residue by EpmC (if this protein is present). Lysylation is critical for the stimulatory effect of EF-P on peptide-bond formation. The lysylation moiety may extend toward the peptidyltransferase center and stabilize the terminal 3-CCA end of the tRNA. Hydroxylation of the C5 position on Lys-34 may allow additional potential stabilizing hydrogen-bond interactions with the P-tRNA.

It localises to the cytoplasm. The protein operates within protein biosynthesis; polypeptide chain elongation. Functionally, involved in peptide bond synthesis. Alleviates ribosome stalling that occurs when 3 or more consecutive Pro residues or the sequence PPG is present in a protein, possibly by augmenting the peptidyl transferase activity of the ribosome. Modification of Lys-34 is required for alleviation. In Photobacterium profundum (strain SS9), this protein is Elongation factor P.